The primary structure comprises 637 residues: Probable membrane transporter protein MamO (637 aa).

Residues 1 to 24 (MIEVGETMGELPTNKIVFCERSWK) lie on the Cytoplasmic side of the membrane. A helical membrane pass occupies residues 25-45 (TPVSILAFLIFVTFAWGIYLL). The Lumenal segment spans residues 46 to 352 (DHYDEDDNFH…AKIGGYSVAD (307 aa)). The tract at residues 78–268 (LYHTVPPAVV…VIVSHLQDVV (191 aa)) is protease-like. His-148 and His-263 together coordinate a divalent metal cation. A helical membrane pass occupies residues 353 to 373 (IVGLVMLALAAGVTGGMMTMG). Residues 370-637 (MTMGGGVLQV…AIALKMLTSV (268 aa)) form a TSUP-like region. Over 374–378 (GGVLQ) the chain is Cytoplasmic. The helical transmembrane segment at 379-399 (VAGMMVFFGYGMYLIRPVVFL) threads the bilayer. Topologically, residues 400–416 (TNVVVYGAASLRNDKAQ) are lumenal. A helical membrane pass occupies residues 417–437 (LVQWDKVKPLIPWGIAGVILG). Residue Tyr-438 is a topological domain, cytoplasmic. The helical transmembrane segment at 439-459 (FIGNAIGDSVVGILLGLFALI) threads the bilayer. Residues 460–517 (MAGKAVMEILQPNAGEETAESISATEAEDEMDELMALADGTSRPKASGLALPEGHARS) are Lumenal-facing. Residues 518–538 (AVLGLPMGLFSGILGISGGVI) form a helical membrane-spanning segment. The Cytoplasmic segment spans residues 539-554 (EVPLQRYVGRISLQNA). A helical membrane pass occupies residues 555 to 575 (IANSSVLVFWASVAGSVVAFL). Residues 576 to 586 (HGSSTGLIHWE) are Lumenal-facing. A helical transmembrane segment spans residues 587–607 (APVTLALVMIPGAYVGGIIGA). The Cytoplasmic portion of the chain corresponds to 608 to 616 (RLMRVLPVR). A helical membrane pass occupies residues 617–637 (VLKGVYAATMAAIALKMLTSV).

The protein in the N-terminal section; belongs to the peptidase S1C family. It in the C-terminal section; belongs to the 4-toluene sulfonate uptake permease (TSUP) (TC 2.A.102) family. The cofactor is a metal cation. In terms of processing, subject to proteolytic cleavage by MamE.

The protein localises to the magnetosome membrane. Its function is as follows. Plays 2 roles; promotes magnetite nucleation/formation and activates the MamE protease. Despite its near conservation of a protease-like sequence, this is probably not a protease. Required in conjunction with MamP for proteolysis of at least MamE, itself and MamP. May transport a solute that controls MamE's protease activity. May place individual iron atoms into the magnetite lattice. This chain is Probable membrane transporter protein MamO (mamO), found in Paramagnetospirillum magneticum (strain ATCC 700264 / AMB-1) (Magnetospirillum magneticum).